Here is a 388-residue protein sequence, read N- to C-terminus: Ferrochelatase (388 aa).

Fe cation-binding residues include H196 and E277.

Belongs to the ferrochelatase family.

Its subcellular location is the cytoplasm. The catalysed reaction is heme b + 2 H(+) = protoporphyrin IX + Fe(2+). It participates in porphyrin-containing compound metabolism; protoheme biosynthesis; protoheme from protoporphyrin-IX: step 1/1. Its function is as follows. Catalyzes the ferrous insertion into protoporphyrin IX. The sequence is that of Ferrochelatase from Nostoc sp. (strain PCC 7120 / SAG 25.82 / UTEX 2576).